The following is a 115-amino-acid chain: NADH-ubiquinone oxidoreductase chain 3 (115 aa).

A run of 3 helical transmembrane segments spans residues 4 to 24 (LMVMLVNITLSSCLIMIAFWL), 55 to 75 (FFLVAITFFLFDLEIALLLPL), and 87 to 107 (MMLTAFILVSVLALGLAYEWM).

It belongs to the complex I subunit 3 family. In terms of assembly, core subunit of respiratory chain NADH dehydrogenase (Complex I) which is composed of 45 different subunits. Interacts with TMEM186. Interacts with TMEM242.

The protein resides in the mitochondrion inner membrane. It carries out the reaction a ubiquinone + NADH + 5 H(+)(in) = a ubiquinol + NAD(+) + 4 H(+)(out). Its function is as follows. Core subunit of the mitochondrial membrane respiratory chain NADH dehydrogenase (Complex I) which catalyzes electron transfer from NADH through the respiratory chain, using ubiquinone as an electron acceptor. Essential for the catalytic activity of complex I. This chain is NADH-ubiquinone oxidoreductase chain 3, found in Peromyscus mexicanus (Mexican deer mouse).